We begin with the raw amino-acid sequence, 158 residues long: Lysozyme C (158 aa).

The N-terminal stretch at 1 to 18 (MRVLPLALLVGLLAVSDA) is a signal peptide. In terms of domain architecture, C-type lysozyme spans 19–150 (KVLGKCEFAR…DQYMAECWSR (132 aa)). Intrachain disulfides connect Cys24–Cys147, Cys46–Cys135, Cys80–Cys93, and Cys89–Cys107. Active-site residues include Glu51 and Asp68.

It belongs to the glycosyl hydrolase 22 family. Monomer. In terms of tissue distribution, strongly expressed in gill and gonad, and marginally detectable in hemolymph and lymphoid organ. Not expressed in kidney, hepatopancreas or tail muscle.

It is found in the secreted. It catalyses the reaction Hydrolysis of (1-&gt;4)-beta-linkages between N-acetylmuramic acid and N-acetyl-D-glucosamine residues in a peptidoglycan and between N-acetyl-D-glucosamine residues in chitodextrins.. In terms of biological role, lysozymes have primarily a bacteriolytic function; those in tissues and body fluids are associated with the monocyte-macrophage system and enhance the activity of immunoagents. Has bacteriolytic activity against Gram-positive bacterium M.luteus, and Gram-negative shrimp pathogenic bacteria V.alginolyticus, V.parahaemolyticus and V.vulnificus. May play a role in host defense. The sequence is that of Lysozyme C from Penaeus merguiensis (Banana prawn).